The chain runs to 140 residues: Lymphocyte antigen 6L (140 aa).

Residues 1–20 (MAPLLLVLWASLVSMELTGG) form the signal peptide. In terms of domain architecture, UPAR/Ly6 spans 31-124 (LSCFECFKVL…GSWEGFWSLP (94 aa)). Disulfide bonds link Cys-33–Cys-50 and Cys-105–Cys-110. Residue Ser-116 is the site of GPI-anchor amidated serine attachment. The propeptide at 117-140 (WEGFWSLPGRLLLPMGLGLFCTLL) is removed in mature form.

The protein localises to the cell membrane. This is Lymphocyte antigen 6L from Mus musculus (Mouse).